The following is a 433-amino-acid chain: Transcription factor TCP18 (433 aa).

2 disordered regions span residues 130 to 163 (QRIS…GTRD) and 247 to 281 (DDRG…RTPI). The TCP domain occupies 148–206 (RTDRHSKIKTAKGTRDRRMRLSLDVAKELFGLQDMLGFDKASKTVEWLLTQAKPEIIKI). Positions 287 to 304 (KEERAKARERAKGRTMEK) constitute a R domain.

Expressed in unelongated axillary buds, and, to a lower extent, in axillary structures such as flowers and siliques.

The protein localises to the nucleus. Transcription factor that prevents axillary bud outgrowth and delays early axillary bud development. Indirectly required for the auxin-induced control of apical dominance. The sequence is that of Transcription factor TCP18 from Arabidopsis thaliana (Mouse-ear cress).